The chain runs to 984 residues: MSKSRAVVELTARFDLGGDDKIRALSLSPISDSQTLVYLGTYSGSLILLSLDTLTNTVSRLASVSLSPSPVESIFVLGEERGRVLALCNGYLFLLDSLLSQPAKRLGGLLKGINVIAKRVRGRDSSSTDLLPSEISTDSSSSKKFLQLLGAGNLVSDVRGNDSRHERVQQGHYVFAVAIGERMLLIELQCAEKEGLSGSFVVLKEILGIGGIKTLVWLDDYVIAGTVKGYSLISCVTGLSGVIFTLPDVSGPPLLKLLCKEWKVLLLVDNVGVVVDTNGQPIGGSLVFRRRPDSVGELSFYLVTVGDGKMEIHQKKSGACVQSVSFGPQGCGPSLLAADEAGDGNLLVVTTLSKLIFYRRVPYEEQIKDLLRKKRYRETISLVEELDSQGEISKDMLSFLHAQIGYLLLFDLRFEEAVNQFLKSEKMEPSEVFPFIMRDPNRWSLVVPRNRYWGLHPPPAPFEDVVDNGLMAIQRANFLRKAGMDTPVDEEFFSDPPSRADLLDSAIKNITRYLEISREKGLTLPVREGIDTLLMLLYRALNRVEDMENLASSGNNCVVEELETLLTESGHLRTLAFLYATKGMGAKALAIWRLFTKNYSSGLWQDSDDLVPYLHDNELIRLSGKEAAAAEAARILEEPCDPELALQHLSWIADVNPLFAIQVLTSDKRTEELSPEQVIQAIDPKKVEIIQRYFQWLIEERDYTDPQLHTSYALSLARSALECVEVQNGIQEADVPNGSEAHDSNVGSISLFEVDVRERLQAFLQSSDLYDPEEILELVEGSELWLEKAILYRRIGKETLVLQILALKLEDCAAAEQYCVEIGRPDAFMQLLDMYLDPQNGKEPMFKAAVRLLHNHGESLDPLQVLDKLSPDMPLKLASDTILRMLRARVHHHRQGQIVHNISRALDVDSRLARLEERSRHMQINDESLCDSCYARLGTKLFAMYPDDTIVCYKCYRRLGESKSVTGRDFKRDVLIKPGWLVNR.

The region spanning 21-339 (KIRALSLSPI…GCGPSLLAAD (319 aa)) is the CNH domain. One copy of the CHCR repeat lies at 663 to 844 (VLTSDKRTEE…YLDPQNGKEP (182 aa)).

Belongs to the TRAP1 family. Component of the class C core vacuole/endosome tethering (CORVET) complex. Their common core is composed of the class C Vps core proteins VPS11, VCL1, VPS18 and VPS33, which in CORVET further associates with VPS3. Interacts directly with VPS11. Binds to RABF2A and RABF2B.

The protein localises to the endosome membrane. It is found in the cytoplasm. Essential protein required during embryogenesis. Believed to act as a component of the putative class C core vacuole/endosome tethering (CORVET) endosomal tethering complexes. CORVET is required for vacuolar transport of SYP22. Involved in root development. Plays a role in vesicle-mediated protein trafficking of the endocytic membrane transport pathway. In Arabidopsis thaliana (Mouse-ear cress), this protein is Vacuolar sorting protein 3.